A 320-amino-acid chain; its full sequence is Malate dehydrogenase (320 aa).

Residues 10-15 (GAGQIG) and Asp-34 contribute to the NAD(+) site. Residues Arg-83 and Arg-89 each coordinate substrate. Residues Asn-96 and 119-121 (ITN) contribute to the NAD(+) site. Residues Asn-121 and Arg-152 each contribute to the substrate site. The active-site Proton acceptor is the His-176.

It belongs to the LDH/MDH superfamily. MDH type 3 family.

It catalyses the reaction (S)-malate + NAD(+) = oxaloacetate + NADH + H(+). Catalyzes the reversible oxidation of malate to oxaloacetate. The chain is Malate dehydrogenase from Dinoroseobacter shibae (strain DSM 16493 / NCIMB 14021 / DFL 12).